Reading from the N-terminus, the 426-residue chain is Putative F-box/LRR-repeat protein At4g15060 (426 aa).

The region spanning 25–71 (MDKISRLPDDLLVKVLLFLPTKIAVSTSILSKRWEFLWMWLPKLEYH) is the F-box domain. LRR repeat units follow at residues 50–75 (STSILSKRWEFLWMWLPKLEYHNTNY), 80–106 (EQRLRSFINLNLQLHRAPIIESLRLKF), 160–187 (ILKLKDQILVDVPRMAYLPSLKYLLLKR), 188–213 (VTYKDSNSLHQLLSSCPVLKNLVVER), 221–259 (TLSITVSSLQRLTLKISRGGSFDELVINTPSLKYFKLTD), 265–290 (ETELDDDSYSYVFKDMPKLEEAHIDS), 311–337 (CVKVNAEEALYREGICFKQLEHLKLCP), 338–363 (CDSNWSKLLARLLKDSPNLRELEIKL), and 373–399 (DPACLENQLNYVVQSSIPSLERFTWTW).

The chain is Putative F-box/LRR-repeat protein At4g15060 from Arabidopsis thaliana (Mouse-ear cress).